We begin with the raw amino-acid sequence, 1171 residues long: ATP-dependent helicase/deoxyribonuclease subunit B (1171 aa).

Belongs to the helicase family. AddB/RexB type 2 subfamily. As to quaternary structure, heterodimer of AddA and RexB. The cofactor is Mg(2+).

Its function is as follows. The heterodimer acts as both an ATP-dependent DNA helicase and an ATP-dependent, dual-direction single-stranded exonuclease. Recognizes the chi site generating a DNA molecule suitable for the initiation of homologous recombination. This subunit has 5' -&gt; 3' nuclease activity but not helicase activity. This Leuconostoc citreum (strain KM20) protein is ATP-dependent helicase/deoxyribonuclease subunit B.